The following is a 466-amino-acid chain: Eukaryotic translation initiation factor 3 subunit M (466 aa).

The tract at residues 40–62 (EISPLLEPLRQQEQSDAEPDRKQ) is disordered. The PCI domain maps to 211 to 378 (AQTHILQALQ…SEFLVHRATY (168 aa)). A disordered region spans residues 424-466 (AAEEAAQGKSNDKGNKSGDRRQRHGNNQQSQQQQQPQEVAAAE). Residues 433 to 443 (SNDKGNKSGDR) show a composition bias toward basic and acidic residues. Residues 451–460 (QQSQQQQQPQ) show a composition bias toward low complexity.

The protein belongs to the eIF-3 subunit M family. In terms of assembly, component of the eukaryotic translation initiation factor 3 (eIF-3) complex.

It localises to the cytoplasm. In terms of biological role, component of the eukaryotic translation initiation factor 3 (eIF-3) complex, which is involved in protein synthesis of a specialized repertoire of mRNAs and, together with other initiation factors, stimulates binding of mRNA and methionyl-tRNAi to the 40S ribosome. The eIF-3 complex specifically targets and initiates translation of a subset of mRNAs involved in cell proliferation. The polypeptide is Eukaryotic translation initiation factor 3 subunit M (Aspergillus oryzae (strain ATCC 42149 / RIB 40) (Yellow koji mold)).